The primary structure comprises 166 residues: Endoribonuclease YbeY (166 aa).

Zn(2+)-binding residues include His130, His134, and His140.

Belongs to the endoribonuclease YbeY family. Zn(2+) serves as cofactor.

It is found in the cytoplasm. In terms of biological role, single strand-specific metallo-endoribonuclease involved in late-stage 70S ribosome quality control and in maturation of the 3' terminus of the 16S rRNA. The protein is Endoribonuclease YbeY of Streptococcus uberis (strain ATCC BAA-854 / 0140J).